We begin with the raw amino-acid sequence, 864 residues long: Xylosyltransferase 2 (864 aa).

Residues 1–15 lie on the Cytoplasmic side of the membrane; it reads MVASARVQKLVRRYK. A helical; Signal-anchor for type II membrane protein membrane pass occupies residues 16-36; the sequence is LAIATALAILLLQGLVVWSFS. Residues 37–864 are Lumenal-facing; sequence GLEEDEPGEK…GPVKADGRLR (828 aa). Disordered stretches follow at residues 39-123 and 136-158; these read EEDE…RQNL and AGFP…DNSF. Over residues 53-65 the composition is skewed to basic and acidic residues; that stretch reads RPLDPGEGSKDTD. A compositionally biased stretch (basic residues) spans 73-82; the sequence is SAGRRHGRWR. A glycan (N-linked (GlcNAc...) asparagine) is linked at Asn122. Disulfide bonds link Cys162/Cys190, Cys206/Cys448, Cys467/Cys480, and Cys469/Cys478. UDP-alpha-D-xylose is bound by residues Val239, Asp267, and 296–298; that span reads TIW. The N-linked (GlcNAc...) asparagine glycan is linked to Asn327. 400–401 provides a ligand contact to UDP-alpha-D-xylose; the sequence is DW. UDP-alpha-D-xylose contacts are provided by residues Ser481 and 504–505; that span reads RK. Cystine bridges form between Cys580-Cys832 and Cys825-Cys838. Asn682 carries N-linked (GlcNAc...) asparagine glycosylation.

Belongs to the glycosyltransferase 14 family. XylT subfamily. As to quaternary structure, monomer. Mg(2+) serves as cofactor. Requires Mn(2+) as cofactor. Post-translationally, contains disulfide bonds.

It localises to the golgi apparatus membrane. The protein resides in the secreted. The enzyme catalyses UDP-alpha-D-xylose + L-seryl-[protein] = 3-O-(beta-D-xylosyl)-L-seryl-[protein] + UDP + H(+). Its pathway is glycan metabolism; chondroitin sulfate biosynthesis. It participates in glycan metabolism; heparan sulfate biosynthesis. Functionally, catalyzes the first step in the biosynthesis of chondroitin sulfate, heparan sulfate and dermatan sulfate proteoglycans, such as DCN. Transfers D-xylose from UDP-D-xylose to specific serine residues of the core protein. The polypeptide is Xylosyltransferase 2 (Xylt2) (Rattus norvegicus (Rat)).